A 921-amino-acid chain; its full sequence is Extended synaptotagmin-2 (921 aa).

Topologically, residues 1–103 (MTANRDAALS…RPGGPENPGG (103 aa)) are cytoplasmic. The segment at 1–103 (MTANRDAALS…RPGGPENPGG (103 aa)) is disordered. A compositionally biased stretch (basic residues) spans 58-75 (GARRRAKTARGLRGHRQR). A helical membrane pass occupies residues 104 to 124 (VLSVELPGLLAQLARSFALLL). The Lumenal portion of the chain corresponds to 125-127 (PVY). The helical transmembrane segment at 128-148 (ALGYLGLSFSWVLLALALLAW) threads the bilayer. The Cytoplasmic portion of the chain corresponds to 149–921 (CRRSRGLKAL…EDGTRPQAMT (773 aa)). The SMP-LTD domain maps to 191–370 (DTERAEWLNK…LPNRITVPLV (180 aa)). C2 domains follow at residues 369-489 (LVSE…DEWF) and 514-639 (NLDK…QLSN). Lysine 400, aspartate 401, aspartate 413, aspartate 460, glutamate 461, aspartate 462, aspartate 464, aspartate 466, and aspartate 467 together coordinate Ca(2+). The interval 660 to 754 (RERPPDHQHS…GHISVKEPTP (95 aa)) is disordered. Serine 691 and serine 693 each carry phosphoserine. Threonine 705 is subject to Phosphothreonine. Serine 736, serine 738, serine 739, serine 743, serine 748, serine 755, serine 758, and serine 761 each carry phosphoserine. The C2 3 domain occupies 786–908 (PLGQIQLTIR…ELAKGWTQWY (123 aa)). Residues 833 to 840 (KRRSGRRK) form a required for phosphatidylinositol 4,5-bisphosphate-dependent location at the cell membrane region.

Belongs to the extended synaptotagmin family. As to quaternary structure, homodimer. Interacts with ESYT1 and ESYT3. Interacts with FGFR1 that has been activated by FGF1 binding. Interacts with the AP-2 complex; identified in a complex with the AP-2 complex and FGFR1. Widely expressed with high level in cerebellum.

The protein resides in the cell membrane. It localises to the endoplasmic reticulum membrane. In terms of biological role, tethers the endoplasmic reticulum to the cell membrane and promotes the formation of appositions between the endoplasmic reticulum and the cell membrane. Binds glycerophospholipids in a barrel-like domain and may play a role in cellular lipid transport. Plays a role in FGF signaling via its role in the rapid internalization of FGFR1 that has been activated by FGF1 binding; this occurs most likely via the AP-2 complex. Promotes the localization of SACM1L at endoplasmic reticulum-plasma membrane contact sites (EPCS). The protein is Extended synaptotagmin-2 of Homo sapiens (Human).